A 1340-amino-acid chain; its full sequence is WASH complex subunit 2 (1340 aa).

The interval 1 to 219 is sufficient for interaction with WASHC3, WASHC4 and WASHC5; required for interaction with WASHC1; that stretch reads MNRTTPDQEL…VGSDRGSIVD (219 aa). S157, S159, S204, S205, and S209 each carry phosphoserine. A compositionally biased stretch (low complexity) spans 201–213; that stretch reads GELSSEEGSVGSD. A disordered region spans residues 201–404; the sequence is GELSSEEGSV…SSSKPGKKIP (204 aa). Positions 219 to 231 are enriched in acidic residues; sequence DTEEEKEEEESDE. Basic and acidic residues predominate over residues 232–241; it reads DFAHHSDNDQ. Acidic residues-rich tracts occupy residues 249 to 258 and 265 to 275; these read SDEEEDDDGC and EKEEEDIEDIE. The residue at position 287 (S287) is a Phosphoserine. Over residues 292–306 the composition is skewed to basic and acidic residues; sequence LAARIKGDAVGRVDE. A Phosphothreonine modification is found at T330. A compositionally biased stretch (gly residues) spans 354–365; it reads GSGGGLFSGGKG. Residues 355-599 are sufficient for interaction with CCDC93; it reads SGGGLFSGGK…QTLSLQAQGE (245 aa). Residues 356–1340 are interaction with VPS35; that stretch reads GGGLFSGGKG…DDPLNAFGGQ (985 aa). The LFa 1 motif lies at 366–377; sequence LFDDEDEESDLF. A phosphoserine mark is found at S394 and S396. Short sequence motifs (LFa) lie at residues 410 to 418, 449 to 462, and 481 to 490; these read VFLGDTDVF, LFDD…DDFF, and IFGDDEGDLF. Disordered regions lie at residues 421–586, 618–663, and 695–838; these read ASVP…GGTA, SSDE…KASL, and DSGG…STGV. The segment covering 450-461 has biased composition (acidic residues); sequence FDDDDGDDDDDF. Basic and acidic residues predominate over residues 506–516; that stretch reads DENKARAEKKV. Residues 517–527 show a composition bias toward low complexity; the sequence is SLPSSKNLKPS. 3 short sequence motifs (LFa) span residues 536–547, 571–582, and 616–628; these read LFSDEEDSEDLF, LFEDEDEEDNLF, and LFSS…WNIP. Phosphoserine is present on residues S538 and S543. Positions 546 to 566 are enriched in low complexity; it reads LFSSQSASKLKGAPLLPGKLP. Phosphoserine is present on residues S618 and S619. Basic and acidic residues predominate over residues 636–646; that stretch reads SDSRSKGESRD. Short sequence motifs (LFa) lie at residues 663 to 673, 689 to 701, and 725 to 737; these read LFEEDEEDDLF, LFED…GSLF, and LFSD…AQLG. A phosphoserine mark is found at S727, S751, S786, and S801. Over residues 740–767 the composition is skewed to basic and acidic residues; it reads PVDKKVESAKESLKFGRTDVAESEKEGL. The LFa 11 signature appears at 802–816; the sequence is LFDEEEDKMEDQNTI. Over residues 822-833 the composition is skewed to basic and acidic residues; that stretch reads EVGKGRDPDARP. 2 short sequence motifs (LFa) span residues 838–846 and 855–861; these read VFQDEELLF and DPDVDLF. Phosphoserine is present on residues S873 and S876. The short motif at 877–887 is the LFa 14 element; that stretch reads LFGDDEDDDLF. Disordered stretches follow at residues 906–950 and 987–1205; these read DYSV…KEPS and FPSS…EDED. Residues 916–930 are compositionally biased toward basic and acidic residues; that stretch reads KHPETIQGIKEKGIW. Residues 936–1340 are interaction with phospholipids; the sequence is QDSSGLAPFK…DDPLNAFGGQ (405 aa). The span at 1027-1045 shows a compositional bias: basic residues; it reads NKSRVKMRGKRRPQTRAAR. Positions 1028–1046 are required for interaction with F-actin-capping protein subunit alpha (CAPZA1 or CAPZA2 or CAPZA3); sequence KSRVKMRGKRRPQTRAARR. A phosphoserine mark is found at S1053 and S1086. Over residues 1093-1109 the composition is skewed to low complexity; it reads EALAAAAAPWEGGPVPG. S1113 is subject to Phosphoserine. Short sequence motifs (LFa) lie at residues 1128–1135, 1170–1184, 1200–1208, 1233–1239, 1261–1269, and 1289–1298; these read LFDSGDIF, MFPA…DDLF, LLEDEDDLF, IFEDDIF, LFDDNIDIF, and IFDDDMDDIF. Phosphoserine is present on residues S1178 and S1179. The disordered stretch occupies residues 1301–1325; sequence GIQAKTAKPKSRSAQAAPEPRFEHK. The LFa 21 motif lies at 1329-1337; that stretch reads IFDDPLNAF.

It belongs to the FAM21 family. As to quaternary structure, component of the WASH core complex also described as WASH regulatory complex (SHRC) composed of WASHC1, WASHC2, WASHC3, WASHC4 and WASHC5; in the complex interacts (via N-terminus) directly with WASHC1. The WASH core complex associates with the F-actin-capping protein dimer (formed by CAPZA1, CAPZA2 or CAPZA3 and CAPZB) in a transient or substoichiometric manner which was initially described as WASH complex. Interacts with VPS35; mediates the association with the retromer CSC complex. Interacts with FKBP15. Interacts with CCDC93, CCDC22, VPS35L; indicative for an association of the WASH core complex with the CCC and retriever complexes. Directly interacts with TBC1D23.

The protein localises to the early endosome membrane. It localises to the cell membrane. In terms of biological role, acts as a component of the WASH core complex that functions as a nucleation-promoting factor (NPF) at the surface of endosomes, where it recruits and activates the Arp2/3 complex to induce actin polymerization, playing a key role in the fission of tubules that serve as transport intermediates during endosome sorting. Mediates the recruitment of the WASH core complex to endosome membranes via binding to phospholipids and VPS35 of the retromer CSC. Mediates the recruitment of the F-actin-capping protein dimer to the WASH core complex probably promoting localized F-actin polymerization needed for vesicle scission. Via its C-terminus binds various phospholipids, most strongly phosphatidylinositol 4-phosphate (PtdIns-(4)P), phosphatidylinositol 5-phosphate (PtdIns-(5)P) and phosphatidylinositol 3,5-bisphosphate (PtdIns-(3,5)P2). Involved in the endosome-to-plasma membrane trafficking and recycling of SNX27-retromer-dependent cargo proteins, such as GLUT1. Required for the association of DNAJC13, ENTR1, ANKRD50 with retromer CSC subunit VPS35. Required for the endosomal recruitment of CCC and retriever complexes subunits COMMD1 and CCDC93 as well as the retrievere complex subunit VPS35L. This is WASH complex subunit 2 from Pongo abelii (Sumatran orangutan).